The primary structure comprises 840 residues: E3 ubiquitin-protein ligase RNF19A (840 aa).

A disordered region spans residues 40–61 (SDRDLQSSTSSVSLPSVKKAPK). A compositionally biased stretch (low complexity) spans 45–56 (QSSTSSVSLPSV). The interval 128 to 351 (DFIECPLCLL…LSPSGCTFWG (224 aa)) is TRIAD supradomain. Zn(2+) is bound by residues C132, C135, C150, H152, C155, C158, C176, C179, C219, C224, C241, C246, C251, C254, H259, C264, C301, and C304. An RING-type 1 zinc finger spans residues 132–179 (CPLCLLRHSKDRFPDIMTCHHRSCVDCLRQYLRIEISESRVNISCPEC). An IBR-type zinc finger spans residues 199–264 (EKYEEFMLRR…KQIWHPNQTC (66 aa)). The RING-type 2; atypical zinc-finger motif lies at 301–332 (CPRCAAYIIKMNDGSCNHMTCAVCGCEFCWLC). C316 is an active-site residue. Residues C321, C324, C329, C332, H340, and C347 each coordinate Zn(2+). The next 2 helical transmembrane spans lie at 368–388 (LVGAPVGIALIAGIAIPAMII) and 424–444 (VIVSPVVAAVTVGIGVPIMLA). 3 disordered regions span residues 625-685 (FKFR…GNMK), 700-721 (QQSTNSSEFEAPSLSDSMPSVA), and 786-808 (CSDVPQPSHAADEHGTSRSGGKP). Residue S631 is modified to Phosphoserine. The segment at 660–840 (ATKWSKEATG…DLKVAVQTEI (181 aa)) is interaction with CASR. The segment covering 671–683 (KKSKSGKLRKKGN) has biased composition (basic residues). A compositionally biased stretch (polar residues) spans 700–717 (QQSTNSSEFEAPSLSDSM).

This sequence belongs to the RBR family. RNF19 subfamily. Interacts with UBE2L3 and UBE2L6. Also interacts with transcription factor Sp1. Interacts with SNCAIP and CASR. Interacts with VCP.

The protein resides in the membrane. Its subcellular location is the cytoplasm. The protein localises to the cytoskeleton. It localises to the microtubule organizing center. It is found in the centrosome. The enzyme catalyses [E2 ubiquitin-conjugating enzyme]-S-ubiquitinyl-L-cysteine + [acceptor protein]-L-lysine = [E2 ubiquitin-conjugating enzyme]-L-cysteine + [acceptor protein]-N(6)-ubiquitinyl-L-lysine.. It functions in the pathway protein modification; protein ubiquitination. Functionally, E3 ubiquitin-protein ligase which accepts ubiquitin from E2 ubiquitin-conjugating enzymes UBE2L3 and UBE2L6 in the form of a thioester and then directly transfers the ubiquitin to targeted substrates, such as SNCAIP or CASR. This chain is E3 ubiquitin-protein ligase RNF19A (Rnf19a), found in Mus musculus (Mouse).